The following is an 851-amino-acid chain: DNA mismatch repair protein MutS (851 aa).

614–621 (GPNMGGKS) is a binding site for ATP.

It belongs to the DNA mismatch repair MutS family.

This protein is involved in the repair of mismatches in DNA. It is possible that it carries out the mismatch recognition step. This protein has a weak ATPase activity. The chain is DNA mismatch repair protein MutS from Photorhabdus laumondii subsp. laumondii (strain DSM 15139 / CIP 105565 / TT01) (Photorhabdus luminescens subsp. laumondii).